Here is an 87-residue protein sequence, read N- to C-terminus: UPF0729 protein C18orf32 homolog (87 aa).

This sequence belongs to the UPF0729 family.

The sequence is that of UPF0729 protein C18orf32 homolog from Esox lucius (Northern pike).